Consider the following 98-residue polypeptide: Aspartyl/glutamyl-tRNA(Asn/Gln) amidotransferase subunit C (98 aa).

The protein belongs to the GatC family. In terms of assembly, heterotrimer of A, B and C subunits.

The catalysed reaction is L-glutamyl-tRNA(Gln) + L-glutamine + ATP + H2O = L-glutaminyl-tRNA(Gln) + L-glutamate + ADP + phosphate + H(+). The enzyme catalyses L-aspartyl-tRNA(Asn) + L-glutamine + ATP + H2O = L-asparaginyl-tRNA(Asn) + L-glutamate + ADP + phosphate + 2 H(+). Its function is as follows. Allows the formation of correctly charged Asn-tRNA(Asn) or Gln-tRNA(Gln) through the transamidation of misacylated Asp-tRNA(Asn) or Glu-tRNA(Gln) in organisms which lack either or both of asparaginyl-tRNA or glutaminyl-tRNA synthetases. The reaction takes place in the presence of glutamine and ATP through an activated phospho-Asp-tRNA(Asn) or phospho-Glu-tRNA(Gln). The chain is Aspartyl/glutamyl-tRNA(Asn/Gln) amidotransferase subunit C from Paenarthrobacter aurescens (strain TC1).